The following is a 290-amino-acid chain: Arylamine N-acetyltransferase 1 (290 aa).

Met1 is subject to N-acetylmethionine. Ser103 lines the CoA pocket. 106–107 (IH) lines the substrate pocket. Residue Tyr208 participates in CoA binding.

This sequence belongs to the arylamine N-acetyltransferase family.

The protein resides in the cytoplasm. It carries out the reaction an arylamine + acetyl-CoA = an N-acetylarylamine + CoA. In terms of biological role, participates in the detoxification of a plethora of hydrazine and arylamine drugs. The polypeptide is Arylamine N-acetyltransferase 1 (NAT1) (Bos taurus (Bovine)).